The primary structure comprises 459 residues: Zinc finger and BTB domain-containing protein 9 (459 aa).

The region spanning 48–112 is the BTB domain; sequence CDVSLLVQGR…IYSGSLHLPL (65 aa). Polar residues predominate over residues 178 to 189; sequence VRSSASTENSVL. Disordered regions lie at residues 178-200 and 212-274; these read VRSS…EGSE and EEEE…ASQI. Glycyl lysine isopeptide (Lys-Gly) (interchain with G-Cter in SUMO2) cross-links involve residues K285, K293, and K368. The interval 293 to 356 is disordered; it reads KEKTKVLSGE…GGTGQAMHGP (64 aa). The C2H2-type 1 zinc finger occupies 397–419; that stretch reads FGCGICNKRFKLKHHLTEHMKTH. The C2H2-type 2; atypical zinc finger occupies 424–446; that stretch reads HACPHCGRRFRVQAFFLRHRDLC.

It localises to the nucleus. May be involved in transcriptional regulation. This chain is Zinc finger and BTB domain-containing protein 9 (Zbtb9), found in Mus musculus (Mouse).